The sequence spans 158 residues: Transcription elongation factor GreA (158 aa).

A coiled-coil region spans residues 53–75 (AKERQGQVEATIGDLEDKLSRAQ).

This sequence belongs to the GreA/GreB family.

In terms of biological role, necessary for efficient RNA polymerase transcription elongation past template-encoded arresting sites. The arresting sites in DNA have the property of trapping a certain fraction of elongating RNA polymerases that pass through, resulting in locked ternary complexes. Cleavage of the nascent transcript by cleavage factors such as GreA or GreB allows the resumption of elongation from the new 3'terminus. GreA releases sequences of 2 to 3 nucleotides. The sequence is that of Transcription elongation factor GreA from Sphingopyxis alaskensis (strain DSM 13593 / LMG 18877 / RB2256) (Sphingomonas alaskensis).